Consider the following 178-residue polypeptide: 6,7-dimethyl-8-ribityllumazine synthase (178 aa).

Residues F23, 61-63, and 85-87 contribute to the 5-amino-6-(D-ribitylamino)uracil site; these read SFE and AVI. (2S)-2-hydroxy-3-oxobutyl phosphate is bound at residue 90 to 91; it reads QT. The Proton donor role is filled by H93. Y118 contributes to the 5-amino-6-(D-ribitylamino)uracil binding site. R132 contacts (2S)-2-hydroxy-3-oxobutyl phosphate.

It belongs to the DMRL synthase family.

The enzyme catalyses (2S)-2-hydroxy-3-oxobutyl phosphate + 5-amino-6-(D-ribitylamino)uracil = 6,7-dimethyl-8-(1-D-ribityl)lumazine + phosphate + 2 H2O + H(+). The protein operates within cofactor biosynthesis; riboflavin biosynthesis; riboflavin from 2-hydroxy-3-oxobutyl phosphate and 5-amino-6-(D-ribitylamino)uracil: step 1/2. Catalyzes the formation of 6,7-dimethyl-8-ribityllumazine by condensation of 5-amino-6-(D-ribitylamino)uracil with 3,4-dihydroxy-2-butanone 4-phosphate. This is the penultimate step in the biosynthesis of riboflavin. In Thermosynechococcus vestitus (strain NIES-2133 / IAM M-273 / BP-1), this protein is 6,7-dimethyl-8-ribityllumazine synthase.